Consider the following 852-residue polypeptide: Tiger protein I3 (852 aa).

The signal sequence occupies residues 1-18 (MKILLFFILFYLFSFSIS). Over 19-830 (YDEVIPLGYE…DVHQYSDARN (812 aa)) the chain is Extracellular. 31 N-linked (GlcNAc...) asparagine glycosylation sites follow: Asn31, Asn47, Asn67, Asn97, Asn129, Asn201, Asn215, Asn228, Asn260, Asn323, Asn352, Asn356, Asn404, Asn441, Asn476, Asn483, Asn501, Asn512, Asn574, Asn592, Asn635, Asn658, Asn661, Asn679, Asn680, Asn723, Asn757, Asn761, Asn773, Asn785, and Asn800. The region spanning 290–367 (IPSIVNSIPK…SSPIAVSIND (78 aa)) is the IPT/TIG domain. A helical membrane pass occupies residues 831 to 851 (IFQNLLLSILIIIIISLFISN). A topological domain (cytoplasmic) is located at residue Ile852.

The protein resides in the membrane. The sequence is that of Tiger protein I3 (tgrI3) from Dictyostelium discoideum (Social amoeba).